The primary structure comprises 478 residues: Protein FAM83E (478 aa).

Residues 1 to 293 (MAASQLAALE…LYAASCPLPP (293 aa)) form a DUF1669 region. 3 disordered regions span residues 292–334 (PPAP…PLAH), 359–436 (RART…LPPA), and 452–478 (DATF…GGQP). The segment covering 309–319 (RSPHRVSRRRS) has biased composition (basic residues). Residues 379–388 (RLSQLSGSSD) are compositionally biased toward polar residues.

The protein belongs to the FAM83 family. As to quaternary structure, directly interacts (via DUF1669) with CSNK1A1, CSNK1A1L, CSNK1D and CSNK1E. May interact with RAF1.

It is found in the cytoplasm. It localises to the perinuclear region. Its function is as follows. May play a role in MAPK signaling. In Homo sapiens (Human), this protein is Protein FAM83E.